A 501-amino-acid chain; its full sequence is Acyl-CoA-binding domain-containing protein 5A (501 aa).

The 90-residue stretch at 9–98 (YEQRFNAAVK…LKLILESMPV (90 aa)) folds into the ACB domain. An acyl-CoA is bound by residues 20-29 (IQNLPPNGSF), 40-44 (YSYYK), Lys66, and Tyr85. A disordered region spans residues 173–405 (IDLEDREDDD…GERWGADGPM (233 aa)). Residues 176–195 (EDREDDDDEDEEGERDEVEE) are compositionally biased toward acidic residues. The segment covering 219-235 (SNGSISQHKGLSNGTHG) has biased composition (polar residues). Composition is skewed to basic and acidic residues over residues 236-254 (SKSD…HMNH), 266-283 (NSEK…HVAS), and 328-366 (RSQD…KRSD). Positions 376 to 389 (SRSPASGSGSAGPQ) are enriched in low complexity. A coiled-coil region spans residues 406-437 (TENLNEQIICALARLQDDMQSVLQRLHTLEAL). The chain crosses the membrane as a helical span at residues 465 to 485 (WWPFDVSLGTVAFAVVWPFVV).

Belongs to the ATG37 family.

The protein localises to the membrane. Functionally, acyl-CoA binding protein which acts as the peroxisome receptor for pexophagy but is dispensable for aggrephagy and nonselective autophagy. Binds medium- and long-chain acyl-CoA esters. In Danio rerio (Zebrafish), this protein is Acyl-CoA-binding domain-containing protein 5A (acbd5a).